Reading from the N-terminus, the 95-residue chain is Glutamyl-tRNA(Gln) amidotransferase subunit C (95 aa).

It belongs to the GatC family. In terms of assembly, heterotrimer of A, B and C subunits.

It carries out the reaction L-glutamyl-tRNA(Gln) + L-glutamine + ATP + H2O = L-glutaminyl-tRNA(Gln) + L-glutamate + ADP + phosphate + H(+). The enzyme catalyses L-aspartyl-tRNA(Asn) + L-glutamine + ATP + H2O = L-asparaginyl-tRNA(Asn) + L-glutamate + ADP + phosphate + 2 H(+). Allows the formation of correctly charged Asn-tRNA(Asn) or Gln-tRNA(Gln) through the transamidation of misacylated Asp-tRNA(Asn) or Glu-tRNA(Gln) in organisms which lack either or both of asparaginyl-tRNA or glutaminyl-tRNA synthetases. The reaction takes place in the presence of glutamine and ATP through an activated phospho-Asp-tRNA(Asn) or phospho-Glu-tRNA(Gln). The sequence is that of Glutamyl-tRNA(Gln) amidotransferase subunit C from Moraxella catarrhalis (Branhamella catarrhalis).